The chain runs to 593 residues: Methionine--tRNA ligase, mitochondrial (593 aa).

The transit peptide at 1 to 29 directs the protein to the mitochondrion; sequence MLRVSAFRLLGRRGASRVSLLEDFSFRYY. Residues 52–62 carry the 'HIGH' region motif; the sequence is FYVNAAPHIGH. Residues 347 to 351 carry the 'KMSKS' region motif; that stretch reads KMSKS. K350 is an ATP binding site.

It belongs to the class-I aminoacyl-tRNA synthetase family.

It localises to the mitochondrion matrix. The enzyme catalyses tRNA(Met) + L-methionine + ATP = L-methionyl-tRNA(Met) + AMP + diphosphate. This is Methionine--tRNA ligase, mitochondrial (MARS2) from Bos taurus (Bovine).